The following is a 680-amino-acid chain: Serine/threonine-protein kinase YPK1 (680 aa).

Residues 1–11 show a composition bias toward basic residues; the sequence is MYSWKSKFKFG. Residues 1 to 117 form a disordered region; the sequence is MYSWKSKFKF…GTPNDATSSS (117 aa). Composition is skewed to basic and acidic residues over residues 12–21 and 41–56; these read KSKEEKEAKH and GEHD…DRKG. Phosphothreonine is present on Thr57. Over residues 59–71 the composition is skewed to low complexity; sequence NPSNSSVVPVRVS. 3 positions are modified to phosphoserine: Ser61, Ser64, and Ser71. Residues 73-83 are compositionally biased toward polar residues; that stretch reads DASSSTSTVRD. Residues 84 to 97 are compositionally biased toward low complexity; the sequence is SNGGNSENTNSSQN. Polar residues predominate over residues 98–117; sequence LDETANIGSTGTPNDATSSS. At Ser170 the chain carries Phosphoserine. A Protein kinase domain is found at 347–602; it reads FDLLKVIGKG…ADEIRNHPFF (256 aa). ATP is bound by residues 353–361 and Lys376; that span reads IGKGSFGKV. Asp470 functions as the Proton acceptor in the catalytic mechanism. Thr502 carries the post-translational modification Phosphothreonine. Thr504 is subject to Phosphothreonine; by PKH1. Residues 603-673 enclose the AGC-kinase C-terminal domain; that stretch reads SQLSWKRLLM…VGNEQLGSSM (71 aa). Phosphoserine occurs at positions 644 and 653. The residue at position 662 (Thr662) is a Phosphothreonine; by PKH1. Ser671 is modified (phosphoserine).

Belongs to the protein kinase superfamily. AGC Ser/Thr protein kinase family. RAC subfamily. Post-translationally, autophosphorylated. Phytosphingosine level stimulates phosphorylation by PKH1. The N-terminal half is phosphorylated by FPK1. Phosphorylation is inhibited by exogenous addition of phytosphingosine.

It localises to the cytoplasm. It is found in the cell membrane. It catalyses the reaction L-seryl-[protein] + ATP = O-phospho-L-seryl-[protein] + ADP + H(+). The catalysed reaction is L-threonyl-[protein] + ATP = O-phospho-L-threonyl-[protein] + ADP + H(+). Activated by phytosphingosine (PHS), a sphingoid long chain base. Activated by PKH1 phosphorylation. Functionally, plays an essential role in the proliferation of yeast cells. Involved in a signaling pathway, required for optimal cell wall integrity, that acts in parallel with the PKC1-SLT2-dependent pathway. Downstream kinase in the sphingolipid-mediated signaling pathway. Phosphorylation is regulated by the intracellular sphingolipid concentration. Disruption or inhibition of sphingolipid synthesis leads to the activation and phosphorylation of YPK1 through the TORC2 and PKH1 pathways, which in turn phosphorylates ORM1 and LAG1 to activate sphingolipid synthesis. Cooperates with SLI1 in mediating resistance to the sphingolipid biosynthesis inhibitor drug myriocin (ISP-1); kinase activity is essential for the resistance. Required for both receptor-mediated and fluid-phase endocytosis, but is not necessary for receptor phosphorylation or ubiquitination. Necessary for the internalization of plasma membrane proteins carrying different types of internalization signals. Acts downstream of the PKH kinases to control endocytosis by phosphorylating components of the endocytic machinery. Phosphorylation of residue Thr-504 in the activation loop and residue Thr-662 are essential for activity. Phosphorylates and down-regulates flippase activator FPK1. This chain is Serine/threonine-protein kinase YPK1 (YPK1), found in Saccharomyces cerevisiae (strain ATCC 204508 / S288c) (Baker's yeast).